Reading from the N-terminus, the 434-residue chain is MSGKLFIILLLLVTPGEARKSFLRFLNIQNPEMLSFTKPEETVIVRSSYEGKRPHSSYLLVKLEDPTVLQVVNVTKTSLDFTDFTINLKTFPGETNLTMQLWESEGRQTRLIEEITNIRVSVFRQTEDSLFQEPIHVNSSVFLLVLLMILLNKCAFGCKIELQVLQTVWKRPLPILLGAVTQFFLMPFCGFLLSQILGLSKAQAFGFVMTCTCPGGGGGYLFALLLEGDVTLAILMACTSTSLALIMMPVNSYLYSCLLGLAGVFHVPVLKIVSTLLFILTPVSIGIVIKHRMPKKAVCLERVVQPLSLTLMLVGVYLAFRMGLVFLRMANLEVFLLGLLVPVLGFSFGYSFAKVYLLPLPVCKTVAIESGMLNSFLALAIIQLSFPQSKAYEASVAPFTVAMCSSCEMLLLLLVYKAKKRPLLSTENEKAPLV.

A signal peptide spans 1–18 (MSGKLFIILLLLVTPGEA). The Extracellular portion of the chain corresponds to 19-129 (RKSFLRFLNI…VSVFRQTEDS (111 aa)). N-linked (GlcNAc...) asparagine glycosylation is found at Asn73 and Asn96. A helical transmembrane segment spans residues 130-150 (LFQEPIHVNSSVFLLVLLMIL). Topologically, residues 151-172 (LNKCAFGCKIELQVLQTVWKRP) are cytoplasmic. The chain crosses the membrane as a helical span at residues 173 to 193 (LPILLGAVTQFFLMPFCGFLL). Residues 194–195 (SQ) are Extracellular-facing. The chain crosses the membrane as a helical span at residues 196–216 (ILGLSKAQAFGFVMTCTCPGG). At 217–232 (GGGYLFALLLEGDVTL) the chain is on the cytoplasmic side. The helical transmembrane segment at 233–255 (AILMACTSTSLALIMMPVNSYLY) threads the bilayer. The Extracellular portion of the chain corresponds to 256 to 268 (SCLLGLAGVFHVP). A helical membrane pass occupies residues 269-289 (VLKIVSTLLFILTPVSIGIVI). The Cytoplasmic portion of the chain corresponds to 290–306 (KHRMPKKAVCLERVVQP). Residues 307-327 (LSLTLMLVGVYLAFRMGLVFL) traverse the membrane as a helical segment. At 328–331 (RMAN) the chain is on the extracellular side. The helical transmembrane segment at 332-352 (LEVFLLGLLVPVLGFSFGYSF) threads the bilayer. The Cytoplasmic portion of the chain corresponds to 353–365 (AKVYLLPLPVCKT). A helical transmembrane segment spans residues 366–386 (VAIESGMLNSFLALAIIQLSF). Over 387–395 (PQSKAYEAS) the chain is Extracellular. Residues 396–416 (VAPFTVAMCSSCEMLLLLLVY) traverse the membrane as a helical segment. Over 417 to 434 (KAKKRPLLSTENEKAPLV) the chain is Cytoplasmic.

This sequence belongs to the bile acid:sodium symporter (BASS) (TC 2.A.28) family.

The protein resides in the membrane. This Rattus norvegicus (Rat) protein is Sodium/bile acid cotransporter 5 (Slc10a5).